The primary structure comprises 274 residues: Karrikin insensitive 2 receptor IA (274 aa).

Serine 95 serves as the catalytic Nucleophile. Catalysis depends on residues aspartate 217 and histidine 246.

It belongs to the AB hydrolase superfamily. In terms of assembly, interacts with MAX2A and MAX2B in the presence of (-)-germacrene D, thus forming an E3 SCF ubiquitin ligase complex (ASK-cullin-F-box) containing MAX2A or MAX2B and KAI2IA recognizing SMAX1A; this leads to the subsequent degradation of the transcriptional corepressor SMAX1A, thus triggering the activation of a downstream signaling cascade. In terms of tissue distribution, strongly expressed in stigma.

Its subcellular location is the nucleus. It localises to the cytoplasm. Its activity is regulated as follows. Hydrolysis activity toward yoshimulactone green (YLG), a fluorescent agonist to strigolactone receptor, is inhibited by (-)-germacrene D and GR24, a synthetic strigolactone analog. Hydrolase involved in the olfaction of sesquiterpene volatile organic compounds (VOCs) during volatile plant communication in a MAX2 proteins-dependent manner. Acts as a karrikin-insensitive receptor that stereospecifically perceives and binds to (-)-germacrene D, particularly in stigmas, and triggers a signaling cascade influencing plant fitness, as the result of reproductive organ growth-promoting effect; this process involves an interaction with MAX2 proteins (e.g. MAX2A and MAX2B) and the subsequent degradation of SMAX1a, a transcriptional corepressor. The protein is Karrikin insensitive 2 receptor IA of Petunia hybrida (Petunia).